The chain runs to 389 residues: G2/M cell-cycle inhibitor DR6 (389 aa).

It belongs to the Roseolovirus DR6 family.

It is found in the host nucleus. Functionally, inhibits the host G2/M cell-cycle progression in a p53-independent manner. The protein is G2/M cell-cycle inhibitor DR6 (DR6L) of Homo sapiens (Human).